Reading from the N-terminus, the 308-residue chain is ADP-L-glycero-D-manno-heptose-6-epimerase (308 aa).

NADP(+)-binding positions include 10–11, 31–32, lysine 38, lysine 53, 75–79, and asparagine 92; these read FI, DN, and EGACS. The active-site Proton acceptor is tyrosine 139. Lysine 143 provides a ligand contact to NADP(+). Substrate is bound at residue asparagine 168. Valine 169 and lysine 177 together coordinate NADP(+). Lysine 177 acts as the Proton acceptor in catalysis. Residues serine 179, histidine 186, 200–203, arginine 208, and tyrosine 271 each bind substrate; that span reads FAGS.

The protein belongs to the NAD(P)-dependent epimerase/dehydratase family. HldD subfamily. Homopentamer. Requires NADP(+) as cofactor.

It catalyses the reaction ADP-D-glycero-beta-D-manno-heptose = ADP-L-glycero-beta-D-manno-heptose. Its pathway is nucleotide-sugar biosynthesis; ADP-L-glycero-beta-D-manno-heptose biosynthesis; ADP-L-glycero-beta-D-manno-heptose from D-glycero-beta-D-manno-heptose 7-phosphate: step 4/4. In terms of biological role, catalyzes the interconversion between ADP-D-glycero-beta-D-manno-heptose and ADP-L-glycero-beta-D-manno-heptose via an epimerization at carbon 6 of the heptose. This chain is ADP-L-glycero-D-manno-heptose-6-epimerase, found in Haemophilus influenzae (strain 86-028NP).